We begin with the raw amino-acid sequence, 301 residues long: Aspartate carbamoyltransferase catalytic subunit (301 aa).

Carbamoyl phosphate-binding residues include Arg-54 and Thr-55. Residue Lys-82 coordinates L-aspartate. Arg-104, His-132, and Gln-135 together coordinate carbamoyl phosphate. L-aspartate-binding residues include Arg-165 and Arg-217. Carbamoyl phosphate contacts are provided by Gly-257 and Pro-258.

It belongs to the aspartate/ornithine carbamoyltransferase superfamily. ATCase family. Heterododecamer (2C3:3R2) of six catalytic PyrB chains organized as two trimers (C3), and six regulatory PyrI chains organized as three dimers (R2).

It carries out the reaction carbamoyl phosphate + L-aspartate = N-carbamoyl-L-aspartate + phosphate + H(+). The protein operates within pyrimidine metabolism; UMP biosynthesis via de novo pathway; (S)-dihydroorotate from bicarbonate: step 2/3. Its function is as follows. Catalyzes the condensation of carbamoyl phosphate and aspartate to form carbamoyl aspartate and inorganic phosphate, the committed step in the de novo pyrimidine nucleotide biosynthesis pathway. The sequence is that of Aspartate carbamoyltransferase catalytic subunit from Thermus aquaticus.